The following is a 768-amino-acid chain: Ribosomal RNA large subunit methyltransferase K/L (768 aa).

One can recognise a THUMP domain in the interval aspartate 60 to leucine 175.

The protein belongs to the methyltransferase superfamily. RlmKL family.

The protein localises to the cytoplasm. It carries out the reaction guanosine(2445) in 23S rRNA + S-adenosyl-L-methionine = N(2)-methylguanosine(2445) in 23S rRNA + S-adenosyl-L-homocysteine + H(+). It catalyses the reaction guanosine(2069) in 23S rRNA + S-adenosyl-L-methionine = N(2)-methylguanosine(2069) in 23S rRNA + S-adenosyl-L-homocysteine + H(+). Its function is as follows. Specifically methylates the guanine in position 2445 (m2G2445) and the guanine in position 2069 (m7G2069) of 23S rRNA. The protein is Ribosomal RNA large subunit methyltransferase K/L of Psychrobacter arcticus (strain DSM 17307 / VKM B-2377 / 273-4).